The chain runs to 188 residues: Elongation factor P (188 aa).

Position 34 is an N6-(3,6-diaminohexanoyl)-5-hydroxylysine (Lys-34).

The protein belongs to the elongation factor P family. Post-translationally, may be beta-lysylated on the epsilon-amino group of Lys-34 by the combined action of EpmA and EpmB, and then hydroxylated on the C5 position of the same residue by EpmC (if this protein is present). Lysylation is critical for the stimulatory effect of EF-P on peptide-bond formation. The lysylation moiety may extend toward the peptidyltransferase center and stabilize the terminal 3-CCA end of the tRNA. Hydroxylation of the C5 position on Lys-34 may allow additional potential stabilizing hydrogen-bond interactions with the P-tRNA.

It is found in the cytoplasm. It participates in protein biosynthesis; polypeptide chain elongation. Involved in peptide bond synthesis. Alleviates ribosome stalling that occurs when 3 or more consecutive Pro residues or the sequence PPG is present in a protein, possibly by augmenting the peptidyl transferase activity of the ribosome. Modification of Lys-34 is required for alleviation. This chain is Elongation factor P, found in Sodalis glossinidius (strain morsitans).